The sequence spans 462 residues: Glycine--tRNA ligase (462 aa).

2 residues coordinate substrate: Arg-99 and Glu-174. Residues 206–208 (RNE), 216–221 (FRTREF), 290–291 (EL), and 334–337 (GADR) each bind ATP. 221–225 (FEQME) lines the substrate pocket. 330 to 334 (EPSLG) is a substrate binding site.

This sequence belongs to the class-II aminoacyl-tRNA synthetase family. In terms of assembly, homodimer.

It localises to the cytoplasm. The enzyme catalyses tRNA(Gly) + glycine + ATP = glycyl-tRNA(Gly) + AMP + diphosphate. Functionally, catalyzes the attachment of glycine to tRNA(Gly). The protein is Glycine--tRNA ligase of Macrococcus caseolyticus (strain JCSC5402) (Macrococcoides caseolyticum).